Here is a 137-residue protein sequence, read N- to C-terminus: Small ribosomal subunit protein uS12 (137 aa).

The disordered stretch occupies residues 1–57; it reads MPTINQLVRKPRKSKVEKSKSPALNVGYNSHKKVQTNVSSPQKRGVATRVGTMTPKK. At aspartate 102 the chain carries 3-methylthioaspartic acid.

The protein belongs to the universal ribosomal protein uS12 family. In terms of assembly, part of the 30S ribosomal subunit. Contacts proteins S8 and S17. May interact with IF1 in the 30S initiation complex.

In terms of biological role, with S4 and S5 plays an important role in translational accuracy. Its function is as follows. Interacts with and stabilizes bases of the 16S rRNA that are involved in tRNA selection in the A site and with the mRNA backbone. Located at the interface of the 30S and 50S subunits, it traverses the body of the 30S subunit contacting proteins on the other side and probably holding the rRNA structure together. The combined cluster of proteins S8, S12 and S17 appears to hold together the shoulder and platform of the 30S subunit. The protein is Small ribosomal subunit protein uS12 of Streptococcus sanguinis (strain SK36).